Reading from the N-terminus, the 849-residue chain is Serine/threonine-protein phosphatase 4 regulatory subunit 3B (849 aa).

Residues M1–V100 enclose the WH1 domain. Phosphoserine is present on residues S117 and S695. A compositionally biased stretch (acidic residues) spans E714–E724. A disordered region spans residues E714 to S849. Residues E733–P764 show a composition bias toward basic and acidic residues. The span at F776–K818 shows a compositional bias: polar residues. Residues Y827–E838 show a composition bias toward acidic residues. S840 bears the Phosphoserine mark.

This sequence belongs to the SMEK family. As to quaternary structure, serine/threonine-protein phosphatase 4 (PP4) occurs in different assemblies of the catalytic and one or more regulatory subunits. Component of the PP4 complex PPP4C-PPP4R2-PPP4R3B. Moderately expressed in tissues and specific brain regions examined.

It is found in the cytoplasm. The protein localises to the cytoskeleton. The protein resides in the microtubule organizing center. Its subcellular location is the centrosome. It localises to the nucleus. Its function is as follows. Regulatory subunit of serine/threonine-protein phosphatase 4 (PP4). May regulate the activity of PPP4C at centrosomal microtubule organizing centers. The polypeptide is Serine/threonine-protein phosphatase 4 regulatory subunit 3B (Homo sapiens (Human)).